A 476-amino-acid chain; its full sequence is Glycogen synthase (476 aa).

K15 contacts ADP-alpha-D-glucose.

The protein belongs to the glycosyltransferase 1 family. Bacterial/plant glycogen synthase subfamily.

It catalyses the reaction [(1-&gt;4)-alpha-D-glucosyl](n) + ADP-alpha-D-glucose = [(1-&gt;4)-alpha-D-glucosyl](n+1) + ADP + H(+). It functions in the pathway glycan biosynthesis; glycogen biosynthesis. Functionally, synthesizes alpha-1,4-glucan chains using ADP-glucose. The sequence is that of Glycogen synthase from Streptococcus sanguinis (strain SK36).